The sequence spans 119 residues: Dolichyl-diphosphooligosaccharide--protein glycosyltransferase subunit DAD1 (119 aa).

The residue at position 2 (Ser2) is an N-acetylserine. The Cytoplasmic segment spans residues 2–30 (SASVASVISRFLEEYLSSTPQRLKLLDAY). Residues 31–51 (LLYILLTGALQFGYCLLVGTF) traverse the membrane as a helical segment. The Lumenal segment spans residues 52–54 (PFN). The helical transmembrane segment at 55 to 75 (SFLSGFISCVGSFILAGNGSL) threads the bilayer. The Cytoplasmic portion of the chain corresponds to 76-81 (RNRSNN). A helical membrane pass occupies residues 82-98 (VFTLVRCFSSLVTLFYS). At 99-119 (RSPPREVPRGACIALFCERGN) the chain is on the lumenal side.

This sequence belongs to the DAD/OST2 family. In terms of assembly, component of the oligosaccharyltransferase (OST) complex. OST exists in two different complex forms which contain common core subunits RPN1, RPN2, OST48, OST4, DAD1 and TMEM258, either STT3A or STT3B as catalytic subunits, and form-specific accessory subunits. STT3A complex assembly occurs through the formation of 3 subcomplexes. Subcomplex 1 contains RPN1 and TMEM258, subcomplex 2 contains the STT3A-specific subunits STT3A, DC2/OSTC, and KCP2 as well as the core subunit OST4, and subcomplex 3 contains RPN2, DAD1, and OST48. The STT3A complex can form stable complexes with the Sec61 complex or with both the Sec61 and TRAP complexes.

It localises to the endoplasmic reticulum membrane. It functions in the pathway protein modification; protein glycosylation. Functionally, subunit of the oligosaccharyl transferase (OST) complex that catalyzes the initial transfer of a defined glycan (Glc(3)Man(9)GlcNAc(2) in eukaryotes) from the lipid carrier dolichol-pyrophosphate to an asparagine residue within an Asn-X-Ser/Thr consensus motif in nascent polypeptide chains, the first step in protein N-glycosylation. N-glycosylation occurs cotranslationally and the complex associates with the Sec61 complex at the channel-forming translocon complex that mediates protein translocation across the endoplasmic reticulum (ER). All subunits are required for a maximal enzyme activity. This Canis lupus familiaris (Dog) protein is Dolichyl-diphosphooligosaccharide--protein glycosyltransferase subunit DAD1.